The following is a 142-amino-acid chain: NADH-quinone oxidoreductase subunit A 2 (142 aa).

The next 3 membrane-spanning stretches (helical) occupy residues 18–38 (FLPLALYTLAASILIGVLLLA), 73–93 (FYLIAIFFIVFDVEAAFIFAW), and 104–124 (GLVHITFFIVILLLGLVWLWL).

It belongs to the complex I subunit 3 family. In terms of assembly, NDH-1 is composed of 14 different subunits. Subunits NuoA, H, J, K, L, M, N constitute the membrane sector of the complex.

It localises to the cell inner membrane. It carries out the reaction a quinone + NADH + 5 H(+)(in) = a quinol + NAD(+) + 4 H(+)(out). In terms of biological role, NDH-1 shuttles electrons from NADH, via FMN and iron-sulfur (Fe-S) centers, to quinones in the respiratory chain. The immediate electron acceptor for the enzyme in this species is believed to be ubiquinone. Couples the redox reaction to proton translocation (for every two electrons transferred, four hydrogen ions are translocated across the cytoplasmic membrane), and thus conserves the redox energy in a proton gradient. This chain is NADH-quinone oxidoreductase subunit A 2, found in Geobacter sulfurreducens (strain ATCC 51573 / DSM 12127 / PCA).